A 132-amino-acid polypeptide reads, in one-letter code: Small ribosomal subunit protein uS8c (132 aa).

The protein belongs to the universal ribosomal protein uS8 family. As to quaternary structure, part of the 30S ribosomal subunit.

Its subcellular location is the plastid. The protein resides in the cyanelle. In terms of biological role, one of the primary rRNA binding proteins, it binds directly to 16S rRNA central domain where it helps coordinate assembly of the platform of the 30S subunit. This Cyanophora paradoxa protein is Small ribosomal subunit protein uS8c (rps8).